Consider the following 387-residue polypeptide: Phosphoglycerate kinase (387 aa).

Substrate is bound by residues 21–23 (DLN), arginine 36, 59–62 (HLGR), arginine 113, and arginine 146. ATP is bound by residues lysine 197, glutamate 314, and 340–343 (GGDT).

This sequence belongs to the phosphoglycerate kinase family. In terms of assembly, monomer.

It is found in the cytoplasm. It carries out the reaction (2R)-3-phosphoglycerate + ATP = (2R)-3-phospho-glyceroyl phosphate + ADP. Its pathway is carbohydrate degradation; glycolysis; pyruvate from D-glyceraldehyde 3-phosphate: step 2/5. This is Phosphoglycerate kinase from Pseudomonas fluorescens (strain Pf0-1).